A 63-amino-acid chain; its full sequence is Large ribosomal subunit protein uL29 (63 aa).

The protein belongs to the universal ribosomal protein uL29 family.

This Haemophilus influenzae (strain 86-028NP) protein is Large ribosomal subunit protein uL29.